Here is a 364-residue protein sequence, read N- to C-terminus: Chorismate synthase (364 aa).

The tract at residues methionine 41–arginine 60 is disordered. The NADP(+) site is built by arginine 48 and arginine 54. Residues arginine 125–serine 127, asparagine 238–alanine 239, glycine 278, lysine 293–serine 297, and arginine 319 each bind FMN.

This sequence belongs to the chorismate synthase family. In terms of assembly, homotetramer. FMNH2 serves as cofactor.

The catalysed reaction is 5-O-(1-carboxyvinyl)-3-phosphoshikimate = chorismate + phosphate. Its pathway is metabolic intermediate biosynthesis; chorismate biosynthesis; chorismate from D-erythrose 4-phosphate and phosphoenolpyruvate: step 7/7. Catalyzes the anti-1,4-elimination of the C-3 phosphate and the C-6 proR hydrogen from 5-enolpyruvylshikimate-3-phosphate (EPSP) to yield chorismate, which is the branch point compound that serves as the starting substrate for the three terminal pathways of aromatic amino acid biosynthesis. This reaction introduces a second double bond into the aromatic ring system. This chain is Chorismate synthase, found in Shewanella baltica (strain OS223).